The following is a 704-amino-acid chain: Elongation factor G (704 aa).

One can recognise a tr-type G domain in the interval 8–291; it reads ANVRNIGIMA…AVIEYLPSPV (284 aa). Residues 17–24, 90–94, and 144–147 each bind GTP; these read AHIDAGKT, DTPGH, and NKMD.

The protein belongs to the TRAFAC class translation factor GTPase superfamily. Classic translation factor GTPase family. EF-G/EF-2 subfamily.

The protein resides in the cytoplasm. Its function is as follows. Catalyzes the GTP-dependent ribosomal translocation step during translation elongation. During this step, the ribosome changes from the pre-translocational (PRE) to the post-translocational (POST) state as the newly formed A-site-bound peptidyl-tRNA and P-site-bound deacylated tRNA move to the P and E sites, respectively. Catalyzes the coordinated movement of the two tRNA molecules, the mRNA and conformational changes in the ribosome. The chain is Elongation factor G from Chlorobium phaeobacteroides (strain BS1).